Consider the following 360-residue polypeptide: Magnesium transporter NIPA2 (360 aa).

Residues 1–9 lie on the Extracellular side of the membrane; that stretch reads MSQGRGKYD. A helical membrane pass occupies residues 10–30; the sequence is FYIGLGLAMSSSIFIGGSFIL. At 31 to 56 the chain is on the cytoplasmic side; it reads KKKGLLRLARKGSMRAGQGGHAYLKE. A helical membrane pass occupies residues 57–77; that stretch reads WLWWAGLLSMGAGEVANFAAY. Ala-78 is a topological domain (extracellular). Residues 79-99 traverse the membrane as a helical segment; that stretch reads FAPATLVTPLGALSVLVSAIL. Topologically, residues 100 to 107 are cytoplasmic; sequence SSYFLNER. A helical membrane pass occupies residues 108–128; it reads LNLHGKIGCLLSILGSTVMVI. The Extracellular segment spans residues 129-149; the sequence is HAPKEEEIETLNEMSHKLGDP. The helical transmembrane segment at 150–170 threads the bilayer; sequence GFVVFATLVVIVALILIFVVG. At 171–175 the chain is on the cytoplasmic side; that stretch reads PRHGQ. A helical membrane pass occupies residues 176-196; that stretch reads TNILVYITICSVIGAFSVSCV. Topologically, residues 197-215 are extracellular; the sequence is KGLGIAIKELFAGKPVLRH. A helical transmembrane segment spans residues 216 to 236; sequence PLAWILLLSLIVCVSTQINYL. At 237-246 the chain is on the cytoplasmic side; sequence NRALDIFNTS. Residues 247-267 traverse the membrane as a helical segment; sequence IVTPIYYVFFTTSVLTCSAIL. Over 268–278 the chain is Extracellular; the sequence is FKEWQDMPVDD. The chain crosses the membrane as a helical span at residues 279–299; the sequence is VIGTLSGFFTIIVGIFLLHAF. Over 300–360 the chain is Cytoplasmic; it reads KDVSFSLASL…SRRNGNLTAF (61 aa).

Belongs to the NIPA family. Widely expressed.

It is found in the cell membrane. The protein localises to the early endosome. The enzyme catalyses Mg(2+)(in) = Mg(2+)(out). In terms of biological role, acts as a selective Mg(2+) transporter. This Homo sapiens (Human) protein is Magnesium transporter NIPA2 (NIPA2).